The sequence spans 122 residues: Large ribosomal subunit protein uL29 (122 aa).

Ser-12 is subject to Phosphoserine.

This sequence belongs to the universal ribosomal protein uL29 family. Component of the large ribosomal subunit (LSU). Mature yeast ribosomes consist of a small (40S) and a large (60S) subunit. The 40S small subunit contains 1 molecule of ribosomal RNA (18S rRNA) and at least 33 different proteins. The large 60S subunit contains 3 rRNA molecules (25S, 5.8S and 5S rRNA) and at least 46 different proteins. uL29 is associated with the polypeptide exit tunnel.

The protein localises to the cytoplasm. It localises to the nucleus. Its subcellular location is the nucleolus. Its function is as follows. Component of the ribosome, a large ribonucleoprotein complex responsible for the synthesis of proteins in the cell. The small ribosomal subunit (SSU) binds messenger RNAs (mRNAs) and translates the encoded message by selecting cognate aminoacyl-transfer RNA (tRNA) molecules. The large subunit (LSU) contains the ribosomal catalytic site termed the peptidyl transferase center (PTC), which catalyzes the formation of peptide bonds, thereby polymerizing the amino acids delivered by tRNAs into a polypeptide chain. The nascent polypeptides leave the ribosome through a tunnel in the LSU and interact with protein factors that function in enzymatic processing, targeting, and the membrane insertion of nascent chains at the exit of the ribosomal tunnel. The protein is Large ribosomal subunit protein uL29 (rpl35) of Schizosaccharomyces pombe (strain 972 / ATCC 24843) (Fission yeast).